An 89-amino-acid chain; its full sequence is Small ribosomal subunit protein uS14A (89 aa).

This sequence belongs to the universal ribosomal protein uS14 family. Part of the 30S ribosomal subunit. Contacts proteins S3 and S10.

Its function is as follows. Binds 16S rRNA, required for the assembly of 30S particles and may also be responsible for determining the conformation of the 16S rRNA at the A site. This is Small ribosomal subunit protein uS14A from Bacillus velezensis (strain DSM 23117 / BGSC 10A6 / LMG 26770 / FZB42) (Bacillus amyloliquefaciens subsp. plantarum).